Consider the following 570-residue polypeptide: Proline--tRNA ligase (570 aa).

The protein belongs to the class-II aminoacyl-tRNA synthetase family. ProS type 1 subfamily. Homodimer.

The protein resides in the cytoplasm. It catalyses the reaction tRNA(Pro) + L-proline + ATP = L-prolyl-tRNA(Pro) + AMP + diphosphate. In terms of biological role, catalyzes the attachment of proline to tRNA(Pro) in a two-step reaction: proline is first activated by ATP to form Pro-AMP and then transferred to the acceptor end of tRNA(Pro). As ProRS can inadvertently accommodate and process non-cognate amino acids such as alanine and cysteine, to avoid such errors it has two additional distinct editing activities against alanine. One activity is designated as 'pretransfer' editing and involves the tRNA(Pro)-independent hydrolysis of activated Ala-AMP. The other activity is designated 'posttransfer' editing and involves deacylation of mischarged Ala-tRNA(Pro). The misacylated Cys-tRNA(Pro) is not edited by ProRS. The sequence is that of Proline--tRNA ligase from Clostridium beijerinckii (strain ATCC 51743 / NCIMB 8052) (Clostridium acetobutylicum).